A 117-amino-acid polypeptide reads, in one-letter code: Ribosome-binding factor A (117 aa).

Belongs to the RbfA family. As to quaternary structure, monomer. Binds 30S ribosomal subunits, but not 50S ribosomal subunits or 70S ribosomes.

The protein resides in the cytoplasm. In terms of biological role, one of several proteins that assist in the late maturation steps of the functional core of the 30S ribosomal subunit. Associates with free 30S ribosomal subunits (but not with 30S subunits that are part of 70S ribosomes or polysomes). Required for efficient processing of 16S rRNA. May interact with the 5'-terminal helix region of 16S rRNA. In Leptospira interrogans serogroup Icterohaemorrhagiae serovar copenhageni (strain Fiocruz L1-130), this protein is Ribosome-binding factor A.